Reading from the N-terminus, the 251-residue chain is Triosephosphate isomerase (251 aa).

10–12 (NWK) contacts substrate. H98 functions as the Electrophile in the catalytic mechanism. Residue E169 is the Proton acceptor of the active site. Substrate is bound by residues G175, S213, and 234–235 (GG).

Belongs to the triosephosphate isomerase family. Homodimer.

The protein localises to the cytoplasm. It carries out the reaction D-glyceraldehyde 3-phosphate = dihydroxyacetone phosphate. It participates in carbohydrate biosynthesis; gluconeogenesis. Its pathway is carbohydrate degradation; glycolysis; D-glyceraldehyde 3-phosphate from glycerone phosphate: step 1/1. Its function is as follows. Involved in the gluconeogenesis. Catalyzes stereospecifically the conversion of dihydroxyacetone phosphate (DHAP) to D-glyceraldehyde-3-phosphate (G3P). This is Triosephosphate isomerase from Paracidovorax citrulli (strain AAC00-1) (Acidovorax citrulli).